A 129-amino-acid chain; its full sequence is MAKEAGRIRRRERKNIASGIAHVNSSFNNTTITITDAQGNAIAWSSAGTMGFKGSRKSTPYAAQVAAEDVAKKAQEHGMRTLEVEVAGPGSGRESALRALQASGFTVTSIRDVTTIPHNGCRPRKRRRV.

The protein belongs to the universal ribosomal protein uS11 family. Part of the 30S ribosomal subunit. Interacts with proteins S7 and S18. Binds to IF-3.

Its function is as follows. Located on the platform of the 30S subunit, it bridges several disparate RNA helices of the 16S rRNA. Forms part of the Shine-Dalgarno cleft in the 70S ribosome. The chain is Small ribosomal subunit protein uS11 from Rhodopseudomonas palustris (strain HaA2).